An 878-amino-acid chain; its full sequence is Phosphoenolpyruvate carboxylase (878 aa).

Catalysis depends on residues His-137 and Lys-545.

This sequence belongs to the PEPCase type 1 family. Mg(2+) is required as a cofactor.

The enzyme catalyses oxaloacetate + phosphate = phosphoenolpyruvate + hydrogencarbonate. Forms oxaloacetate, a four-carbon dicarboxylic acid source for the tricarboxylic acid cycle. The protein is Phosphoenolpyruvate carboxylase of Proteus mirabilis (strain HI4320).